A 273-amino-acid polypeptide reads, in one-letter code: MPGDHRRIRGPEESQPPQLYAAEDDETPAARDPTRLRPVYARAGLLSQAKGSAYLEAGGTKVLCAVSGPRQAEGGERGSGPAGAGGEAPAALRGRLLCDFRRAPFSGRRRRAPQGGGGEDRELGLALQEALEPAVRLGRYPRAQLEVSALLLEDGGCALAAALTAAALALADAGVEMYDLVVGCGLSLTPGPSPTWLLDPTRLEEEHSAAGLTVALMPVLNQVAGLLGSGEGGQTESWTDAVRLGLEGCQRLYPVLQQCLVRAARRRGAAAPP.

A disordered region spans residues 1 to 36 (MPGDHRRIRGPEESQPPQLYAAEDDETPAARDPTRL).

It belongs to the RNase PH family. Component of the RNA exosome core complex (Exo-9), composed of EXOSC1, EXOSC2, EXOSC3, EXOSC4, EXOSC5, EXOSC6, EXOSC7, EXOSC8 and EXOSC9; within the complex interacts with EXOSC1, EXOSC7 and EXOSC8. The catalytically inactive RNA exosome core complex (Exo-9) associates with the catalytic subunit EXOSC10/RRP6. Exo-9 may associate with DIS3 to form the nucleolar exosome complex, or DIS3L to form the cytoplasmic exosome complex. Exo-9 is formed by a hexameric base ring consisting of the heterodimers EXOSC4-EXOSC9, EXOSC5-EXOSC8 and EXOSC6-EXOSC7, and a cap ring consisting of EXOSC1, EXOSC2 and EXOSC3. The RNA exosome complex associates with cofactors EXOSC10/RRP6, C1D/RRP47, MPHOSPH6/MPP6 and MTREX/MTR4.

Its subcellular location is the cytoplasm. It is found in the nucleus. The protein resides in the nucleolus. Functionally, non-catalytic component of the RNA exosome complex which has 3'-&gt;5' exoribonuclease activity and participates in a multitude of cellular RNA processing and degradation events. In the nucleus, the RNA exosome complex is involved in proper maturation of stable RNA species such as rRNA, snRNA and snoRNA, in the elimination of RNA processing by-products and non-coding 'pervasive' transcripts, such as antisense RNA species and promoter-upstream transcripts (PROMPTs), and of mRNAs with processing defects, thereby limiting or excluding their export to the cytoplasm. The RNA exosome may be involved in Ig class switch recombination (CSR) and/or Ig variable region somatic hypermutation (SHM) by targeting AICDA deamination activity to transcribed dsDNA substrates. In the cytoplasm, the RNA exosome complex is involved in general mRNA turnover and specifically degrades inherently unstable mRNAs containing AU-rich elements (AREs) within their 3' untranslated regions, and in RNA surveillance pathways, preventing translation of aberrant mRNAs. It seems to be involved in degradation of histone mRNA. The catalytic inactive RNA exosome core complex of 9 subunits (Exo-9) is proposed to play a pivotal role in the binding and presentation of RNA for ribonucleolysis, and to serve as a scaffold for the association with catalytic subunits and accessory proteins or complexes. The polypeptide is Exosome complex component MTR3 (Exosc6) (Mus musculus (Mouse)).